The following is an 832-amino-acid chain: MKQKRGKQDVKMLESAPPQLLPKKGRLEISELAPQQRTIRTAEEIETAYNEAVRKHPFYDNADHTIDFHDATVFRDARGVVGGVFLPGALPAFAATMAADVLRPAAVRTSLRSNMFGGFAPLSGIAGYFDYRGSPVELKCRKTSFTYENVHSWPNVFPMIDYVSAIYKAVFPEQWAAQDAAVPDIVRIHGSPFSTLTVNQQFRTASHTDAGDFDMGYGLLAVLEGKFEGLSLALDDFGVCFRMQPRDILIFNTHFFHSNTEPELNHPRDDWSRLTCVCYYRAALGEPACVAEYERRLARAKEIGASPPPAVDAILQKDNGNNFNKPAPTFPYLLTPFGGAASVCSLHCCTAKLLRLHELLLENPTLEVILFGESLRTDDGLPRREKEQLISVHLPVVVKMSPSGGFSELGGALKAAEEKQYFFEEKYLADELGPDLMSMWTQSRAHWLRLVKEDWERLCRRDPERTKFTWNNSSAMNAAFFDLCEVAKQMMIGLLNKETPSSAENHSFWILFAAHLNYACTTENGMPRDAVGMHKLNVKLKDFHFGGTRYLKDMPPEEQERRLERKKRIEEARRRGSSAHETHTDNWLLNDTFDYQQEDRKVEFEENGWMTPEAYVKHLGLKPCGDVTAAASPTEPIHVLVVLPRPAAAATAKDAKRDVPLATSEESIRLLMNPAAQRVLRGKARNVALPSPLSFGGVKITVLFDGDDIDCIHPDFVILQHLLATIEEDEAAKARVKYWARVARYCVFVVETDVRDRRHFLLREEVRVAYEDVAEDCFRSLHAAAYSTKYNRLRTTPSLIALCNRKNIGLRFKFRGSPLNTIALVVVGERLD.

The segment covering 1 to 12 (MKQKRGKQDVKM) has biased composition (basic and acidic residues). The interval 1–24 (MKQKRGKQDVKMLESAPPQLLPKK) is disordered. Residues 80–282 (VVGGVFLPGA…RLTCVCYYRA (203 aa)) are thymine dioxygenase. Residues histidine 207, aspartate 209, and histidine 257 each contribute to the Fe cation site. Arginine 273 is a binding site for 2-oxoglutarate. Residues 409–578 (LGGALKAAEE…IEEARRRGSS (170 aa)) are DNA-binding JBP1 domain.

It belongs to the TET family. JBP1 subfamily. As to quaternary structure, monomer. Binds to DNA as a monomer. The cofactor is Fe(2+).

The protein resides in the nucleus. The enzyme catalyses thymine + 2-oxoglutarate + O2 = 5-hydroxymethyluracil + succinate + CO2. In terms of biological role, dioxygenase that catalyzes the first step of DNA base J (beta-d-glucosyl-HOMedU) biosynthesis by converting thymine to 5-hydroxymethyluracil (HOMedU). DNA base J is a hypermodified thymidine residue found in the genome of kinetoplastid parasites, which is localized primarily to repetitive DNA, namely the telomeres, and is implicated in the regulation of antigenic variation. Also specifically binds to base J-containing DNA (J-DNA). Involved in propagation and maintenance of DNA base J synthesis initiated by JBP2 by specifically binding already synthesized DNA base J and propagating J synthesis. Thymine dioxygenase activity and J-DNA-binding are independent functions. This chain is Thymine dioxygenase JBP1-A (JBP1A), found in Trypanosoma cruzi (strain CL Brener).